Reading from the N-terminus, the 394-residue chain is Ornithine aminotransferase 1 (394 aa).

An N6-(pyridoxal phosphate)lysine modification is found at Lys-252.

This sequence belongs to the class-III pyridoxal-phosphate-dependent aminotransferase family. OAT subfamily. Requires pyridoxal 5'-phosphate as cofactor.

Its subcellular location is the cytoplasm. The enzyme catalyses a 2-oxocarboxylate + L-ornithine = L-glutamate 5-semialdehyde + an L-alpha-amino acid. The protein operates within amino-acid biosynthesis; L-proline biosynthesis; L-glutamate 5-semialdehyde from L-ornithine: step 1/1. Functionally, catalyzes the interconversion of ornithine to glutamate semialdehyde. The polypeptide is Ornithine aminotransferase 1 (Staphylococcus aureus (strain MRSA252)).